The primary structure comprises 525 residues: MSFDLVAGNARSNFVFKNWAGIYSCRPQLYFQPNSIDEVVQIVKAAIEQGKTIVTVGSGHSPSDMCVTDQWLMNLDNLNSVVEFKENKEELYADVTVEAGLRIYQLSEILAEKGYAIQNLGSISEQSVAGIISTGTHGSSPYHGLVSSQYVNLTIVNGKGEVVFLDSENSPEVFRAATLSLGKIGIIVKATIRVIPEFNIKSTQEVIHFETLLNNWETIWTSSEFIRCWWYPYTRKVVLWRGSKTEEPLTAPRKSWWGSTFGRFIYESLIWISVKIYPALTPYVESFVFHQQYGRVETYGSGDVSVQTSIAGLNMDCLFSQFVDEWGCPLNNGPEVLRSLDYSITQAAQNKEFFVHVPVEVRCSNTTLPAEIPDYSNRTKTSAGPVFGNTLRPYLDATPRHLRYAPLSDVTNSQLSLYINATIYRPFGSNSPIHKWFTLFEDTMGAAGGKPHWAKNFLGATSMAAGKVKDEKDYDDYEMRGMATKIKEWYGEDLLKFREIRSQQDPNNVFMANKEWAIRNGIIEP.

The 175-residue stretch at 23–197 (YSCRPQLYFQ…VKATIRVIPE (175 aa)) folds into the FAD-binding PCMH-type domain. H60 bears the Pros-8alpha-FAD histidine mark.

The protein belongs to the oxygen-dependent FAD-linked oxidoreductase family. The cofactor is FAD.

It is found in the mitochondrion membrane. It catalyses the reaction D-arabinono-1,4-lactone + O2 = dehydro-D-arabinono-1,4-lactone + H2O2 + H(+). Its pathway is cofactor biosynthesis; D-erythroascorbate biosynthesis; dehydro-D-arabinono-1,4-lactone from D-arabinose: step 2/2. The protein is D-arabinono-1,4-lactone oxidase (ALO1) of Kluyveromyces lactis (strain ATCC 8585 / CBS 2359 / DSM 70799 / NBRC 1267 / NRRL Y-1140 / WM37) (Yeast).